Reading from the N-terminus, the 264-residue chain is Glutamate 5-kinase (264 aa).

ATP is bound at residue K15. Substrate contacts are provided by S55, D142, and N154. Residues S174–D175 and T216–K222 each bind ATP.

It belongs to the glutamate 5-kinase family.

The protein localises to the cytoplasm. The enzyme catalyses L-glutamate + ATP = L-glutamyl 5-phosphate + ADP. It participates in amino-acid biosynthesis; L-proline biosynthesis; L-glutamate 5-semialdehyde from L-glutamate: step 1/2. In terms of biological role, catalyzes the transfer of a phosphate group to glutamate to form L-glutamate 5-phosphate. The protein is Glutamate 5-kinase of Alkaliphilus metalliredigens (strain QYMF).